The chain runs to 370 residues: D-alanine--D-alanine ligase (370 aa).

The region spanning 144 to 352 is the ATP-grasp domain; it reads KKIFADAGIP…YGALIERLVD (209 aa). 177–232 contacts ATP; sequence EEVLTYPVFVKPANLGSSVGISKATNKKELVDAMTEAFLYDRRVVVEQGVVAREIE. Mg(2+)-binding residues include Asp-306, Glu-319, and Asn-321.

Belongs to the D-alanine--D-alanine ligase family. Mg(2+) serves as cofactor. The cofactor is Mn(2+).

It is found in the cytoplasm. The enzyme catalyses 2 D-alanine + ATP = D-alanyl-D-alanine + ADP + phosphate + H(+). Its pathway is cell wall biogenesis; peptidoglycan biosynthesis. Functionally, cell wall formation. This is D-alanine--D-alanine ligase from Listeria monocytogenes serovar 1/2a (strain ATCC BAA-679 / EGD-e).